The sequence spans 490 residues: ATP synthase subunit beta, chloroplastic (490 aa).

Position 170–177 (170–177 (GGAGVGKT)) interacts with ATP.

Belongs to the ATPase alpha/beta chains family. F-type ATPases have 2 components, CF(1) - the catalytic core - and CF(0) - the membrane proton channel. CF(1) has five subunits: alpha(3), beta(3), gamma(1), delta(1), epsilon(1). CF(0) has four main subunits: a(1), b(1), b'(1) and c(9-12).

Its subcellular location is the plastid. The protein resides in the chloroplast thylakoid membrane. The catalysed reaction is ATP + H2O + 4 H(+)(in) = ADP + phosphate + 5 H(+)(out). In terms of biological role, produces ATP from ADP in the presence of a proton gradient across the membrane. The catalytic sites are hosted primarily by the beta subunits. This is ATP synthase subunit beta, chloroplastic from Ipomoea quamoclit (Cypress vine).